A 427-amino-acid polypeptide reads, in one-letter code: N-myc proto-oncogene protein (427 aa).

Disordered regions lie at residues 45–79, 144–173, 195–255, and 297–349; these read FELL…SVGL, EKLQ…SGRA, AAEG…STNK, and APSP…RNHN. Pro residues-rich tracts occupy residues 49–61 and 152–167; these read PTPP…PAPG and AAPP…PPVP. Residues 210 to 221 show a composition bias toward low complexity; the sequence is RASSSSSSSGDD. Residues 222–242 are compositionally biased toward acidic residues; it reads TLSDSEDDEDEEEEDEEEEID. Ser-224 and Ser-226 each carry phosphoserine; by CK2. The bHLH domain maps to 343 to 396; the sequence is ERRRNHNILERQRANDLRSSFLTLRDHVLSELVQNEKAAKVVILKKATEYVHSL. The tract at residues 396–417 is leucine-zipper; that stretch reads LQAEEQKLLLEKEKLQARQEQL.

Efficient DNA binding requires dimerization with another bHLH protein. Binds DNA as a heterodimer with MAX.

Its subcellular location is the nucleus. The chain is N-myc proto-oncogene protein (MYCN) from Serinus canaria (Island canary).